The following is a 190-amino-acid chain: Crossover junction endodeoxyribonuclease RuvC (190 aa).

Active-site residues include Asp-8, Glu-67, and Asp-139. Residues Asp-8, Glu-67, and Asp-139 each coordinate Mg(2+).

This sequence belongs to the RuvC family. Homodimer which binds Holliday junction (HJ) DNA. The HJ becomes 2-fold symmetrical on binding to RuvC with unstacked arms; it has a different conformation from HJ DNA in complex with RuvA. In the full resolvosome a probable DNA-RuvA(4)-RuvB(12)-RuvC(2) complex forms which resolves the HJ. Mg(2+) serves as cofactor.

The protein resides in the cytoplasm. It catalyses the reaction Endonucleolytic cleavage at a junction such as a reciprocal single-stranded crossover between two homologous DNA duplexes (Holliday junction).. Functionally, the RuvA-RuvB-RuvC complex processes Holliday junction (HJ) DNA during genetic recombination and DNA repair. Endonuclease that resolves HJ intermediates. Cleaves cruciform DNA by making single-stranded nicks across the HJ at symmetrical positions within the homologous arms, yielding a 5'-phosphate and a 3'-hydroxyl group; requires a central core of homology in the junction. The consensus cleavage sequence is 5'-(A/T)TT(C/G)-3'. Cleavage occurs on the 3'-side of the TT dinucleotide at the point of strand exchange. HJ branch migration catalyzed by RuvA-RuvB allows RuvC to scan DNA until it finds its consensus sequence, where it cleaves and resolves the cruciform DNA. In Haemophilus influenzae (strain PittEE), this protein is Crossover junction endodeoxyribonuclease RuvC.